We begin with the raw amino-acid sequence, 261 residues long: Cytochrome c oxidase subunit 3 (261 aa).

Topologically, residues 1-15 (MTHQTHAYHMVNPSP) are mitochondrial matrix. The helical transmembrane segment at 16–34 (WPLTGALSALLMTSGLTMW) threads the bilayer. The Mitochondrial intermembrane segment spans residues 35-40 (FHFNSM). Residues 41-66 (LLLSLGLLTNTLTMYQWWRDIIREST) form a helical membrane-spanning segment. Residues 67–72 (FQGHHT) are Mitochondrial matrix-facing. A helical membrane pass occupies residues 73–105 (SVVQKGLRYGMILFIISEVLFFTGFFWAFYHSS). Residues 106–128 (LAPTPELGGCWPPTGIHPLNPLE) are Mitochondrial intermembrane-facing. A helical membrane pass occupies residues 129–152 (VPLLNTSILLASGVSITWAHHSLM). Residues 153–155 (EGD) lie on the Mitochondrial matrix side of the membrane. Residues 156–183 (RKHMIQALSITIALGVYFTLLQASEYYE) traverse the membrane as a helical segment. The Mitochondrial intermembrane portion of the chain corresponds to 184–190 (APFTISD). The helical transmembrane segment at 191-223 (GVYGSTFFVATGFHGLHVIIGSTFLAVCLLRQL) threads the bilayer. Residues 224–232 (KFHFTSNHH) are Mitochondrial matrix-facing. Residues 233–256 (FGFEAAAWYWHFVDVVWLFLYVSI) traverse the membrane as a helical segment. The Mitochondrial intermembrane portion of the chain corresponds to 257–261 (YWWGS).

It belongs to the cytochrome c oxidase subunit 3 family. Component of the cytochrome c oxidase (complex IV, CIV), a multisubunit enzyme composed of 14 subunits. The complex is composed of a catalytic core of 3 subunits MT-CO1, MT-CO2 and MT-CO3, encoded in the mitochondrial DNA, and 11 supernumerary subunits COX4I, COX5A, COX5B, COX6A, COX6B, COX6C, COX7A, COX7B, COX7C, COX8 and NDUFA4, which are encoded in the nuclear genome. The complex exists as a monomer or a dimer and forms supercomplexes (SCs) in the inner mitochondrial membrane with NADH-ubiquinone oxidoreductase (complex I, CI) and ubiquinol-cytochrome c oxidoreductase (cytochrome b-c1 complex, complex III, CIII), resulting in different assemblies (supercomplex SCI(1)III(2)IV(1) and megacomplex MCI(2)III(2)IV(2)).

It is found in the mitochondrion inner membrane. It carries out the reaction 4 Fe(II)-[cytochrome c] + O2 + 8 H(+)(in) = 4 Fe(III)-[cytochrome c] + 2 H2O + 4 H(+)(out). Component of the cytochrome c oxidase, the last enzyme in the mitochondrial electron transport chain which drives oxidative phosphorylation. The respiratory chain contains 3 multisubunit complexes succinate dehydrogenase (complex II, CII), ubiquinol-cytochrome c oxidoreductase (cytochrome b-c1 complex, complex III, CIII) and cytochrome c oxidase (complex IV, CIV), that cooperate to transfer electrons derived from NADH and succinate to molecular oxygen, creating an electrochemical gradient over the inner membrane that drives transmembrane transport and the ATP synthase. Cytochrome c oxidase is the component of the respiratory chain that catalyzes the reduction of oxygen to water. Electrons originating from reduced cytochrome c in the intermembrane space (IMS) are transferred via the dinuclear copper A center (CU(A)) of subunit 2 and heme A of subunit 1 to the active site in subunit 1, a binuclear center (BNC) formed by heme A3 and copper B (CU(B)). The BNC reduces molecular oxygen to 2 water molecules using 4 electrons from cytochrome c in the IMS and 4 protons from the mitochondrial matrix. This is Cytochrome c oxidase subunit 3 (MT-CO3) from Sus scrofa (Pig).